The chain runs to 666 residues: DNA ligase (666 aa).

NAD(+) contacts are provided by residues 31–35 (DYDFD), 80–81 (SL), and Glu111. Lys113 acts as the N6-AMP-lysine intermediate in catalysis. The NAD(+) site is built by Arg134, Glu170, Lys285, and Lys309. Residues Cys403, Cys406, Cys421, and Cys427 each contribute to the Zn(2+) site. Residues 587 to 666 (VVSNKLLGKI…ESDFSALLTS (80 aa)) enclose the BRCT domain.

It belongs to the NAD-dependent DNA ligase family. LigA subfamily. Mg(2+) serves as cofactor. It depends on Mn(2+) as a cofactor.

The catalysed reaction is NAD(+) + (deoxyribonucleotide)n-3'-hydroxyl + 5'-phospho-(deoxyribonucleotide)m = (deoxyribonucleotide)n+m + AMP + beta-nicotinamide D-nucleotide.. In terms of biological role, DNA ligase that catalyzes the formation of phosphodiester linkages between 5'-phosphoryl and 3'-hydroxyl groups in double-stranded DNA using NAD as a coenzyme and as the energy source for the reaction. It is essential for DNA replication and repair of damaged DNA. The chain is DNA ligase from Flavobacterium psychrophilum (strain ATCC 49511 / DSM 21280 / CIP 103535 / JIP02/86).